A 129-amino-acid chain; its full sequence is LEM domain-containing protein 1 (129 aa).

Residues 1 to 45 enclose the LEM domain; that stretch reads MVDVKCLSDYELHKHLMKLGFTPGPILPSTRKTYEKKLVQLLASP. Residues 45–129 form a disordered region; it reads PPWKPPVMKR…RAPRTTSHGA (85 aa). Basic and acidic residues predominate over residues 83–97; sequence SLKKTTLDATRDPRA.

This Mus musculus (Mouse) protein is LEM domain-containing protein 1 (Lemd1).